The primary structure comprises 579 residues: Pre-mRNA-processing factor 17 (579 aa).

Residues 1-19 are compositionally biased toward low complexity; it reads MSAAIAALAASYGSGSGSE. Disordered stretches follow at residues 1–34 and 204–237; these read MSAA…LPAA and DVAK…PGEE. WD repeat units follow at residues 286–326, 330–369, 371–413, 416–455, 459–498, 504–545, and 548–578; these read GHTK…RCLR, GHSK…CISR, TNRK…IVQE, RHLG…DFKY, PSMH…RLNK, GHMV…LYSR, and AHDK…IKLW.

Component of the catalytic spliceosome C complexes. Component of the postcatalytic spliceosome P complex. Interacts with PPIL1; this interaction leads to CDC40 isomerization. Post-translationally, undergoes isomerization of the peptide bond between Gly-94 and Pro-95. The reaction is catalyzed by PPIL1.

The protein localises to the nucleus. The protein resides in the nucleus speckle. In terms of biological role, required for pre-mRNA splicing as component of the activated spliceosome. Plays an important role in embryonic brain development; this function does not require proline peptide bond isomerization. This chain is Pre-mRNA-processing factor 17 (Cdc40), found in Mus musculus (Mouse).